Here is a 137-residue protein sequence, read N- to C-terminus: MKPLRKERLQQAIKQELSKILLEDMNDERLKFVTITDVELSDDQKYLKVYFSTMPGKNSEQILQSLERVKGYVSGEVARTLRLRFAPEIKFELDNSIERGVRMVKLLEDLEKKDEVKEDESHEDESTDHTEETNEEP.

Positions 112-137 (KKDEVKEDESHEDESTDHTEETNEEP) are disordered. The segment covering 127-137 (TDHTEETNEEP) has biased composition (basic and acidic residues).

The protein belongs to the RbfA family. As to quaternary structure, monomer. Binds 30S ribosomal subunits, but not 50S ribosomal subunits or 70S ribosomes.

The protein localises to the cytoplasm. Its function is as follows. One of several proteins that assist in the late maturation steps of the functional core of the 30S ribosomal subunit. Associates with free 30S ribosomal subunits (but not with 30S subunits that are part of 70S ribosomes or polysomes). Required for efficient processing of 16S rRNA. May interact with the 5'-terminal helix region of 16S rRNA. The polypeptide is Ribosome-binding factor A (Coprothermobacter proteolyticus (strain ATCC 35245 / DSM 5265 / OCM 4 / BT)).